A 637-amino-acid polypeptide reads, in one-letter code: DNA mismatch repair protein MutL (637 aa).

Polar residues predominate over residues 343 to 352 (QQSPDRQVSP). The disordered stretch occupies residues 343-411 (QQSPDRQVSP…SARNGDVSLP (69 aa)). Basic and acidic residues predominate over residues 365–380 (SIERKPSVSYDVRDSH). A compositionally biased stretch (low complexity) spans 388–397 (YSSGSSSYRS).

Belongs to the DNA mismatch repair MutL/HexB family.

This protein is involved in the repair of mismatches in DNA. It is required for dam-dependent methyl-directed DNA mismatch repair. May act as a 'molecular matchmaker', a protein that promotes the formation of a stable complex between two or more DNA-binding proteins in an ATP-dependent manner without itself being part of a final effector complex. This Shewanella halifaxensis (strain HAW-EB4) protein is DNA mismatch repair protein MutL.